Consider the following 321-residue polypeptide: MSASVFVVVASCLAALAHGYANPGSCLGACNVHDPALIRRESDGKYFRFSTGNKISYASSSSIEGPWTVLGSVLPSGSSIDLPGNDDLWAPDVSLVNGVYHVYYSVSTFGSQSSAIGLATSSTMDLNSWTDHGSTGIQSSSSKPYNAIDGNLFKDGGTYYMNFGSFWHDIYQAPMNSAATSVASSSYNIAYNPSGTHAVEGAFMYKYGNYYYLFFSAGICCGYDTSRPASGEEYKIKVCRSTSATGNFVDANGVACTNGGGTVVLESHGNVYGPGGQGVFTDPSLGPILYYHYVDTTIGYADSQKLFGWNKIDFSSGWPVV.

Positions 1 to 19 (MSASVFVVVASCLAALAHG) are cleaved as a signal peptide. The Proton acceptor role is filled by Asp34. The active-site Proton donor is the Glu200.

It belongs to the glycosyl hydrolase 43 family.

The protein localises to the secreted. It catalyses the reaction Endohydrolysis of (1-&gt;5)-alpha-arabinofuranosidic linkages in (1-&gt;5)-arabinans.. It participates in glycan metabolism; L-arabinan degradation. Endo-1,5-alpha-L-arabinanase involved in degradation of pectin. Its preferred substrate is linear 1,5-alpha-L-arabinan. The polypeptide is Probable arabinan endo-1,5-alpha-L-arabinosidase A (abnA) (Aspergillus fumigatus (strain ATCC MYA-4609 / CBS 101355 / FGSC A1100 / Af293) (Neosartorya fumigata)).